The primary structure comprises 356 residues: Protein MGF 360-3L (356 aa).

The ANK repeat unit spans residues 61-93 (KLNTALVLAVKENNDDLIMLFTEWGANINYGLL).

This sequence belongs to the asfivirus MGF 360 family.

In terms of biological role, plays a role in virus cell tropism, and may be required for efficient virus replication in macrophages. The sequence is that of Protein MGF 360-3L from Ornithodoros (relapsing fever ticks).